The following is a 709-amino-acid chain: Phosphoribosylformylglycinamidine synthase subunit PurL (709 aa).

H36 is an active-site residue. Positions 39 and 80 each coordinate ATP. E82 is a Mg(2+) binding site. Residues S83–H86 and R105 contribute to the substrate site. H84 (proton acceptor) is an active-site residue. Mg(2+) is bound at residue D106. Q226 contacts substrate. Mg(2+) is bound at residue D252. E294–Q296 serves as a coordination point for substrate. The ATP site is built by D470 and G507. S510 is a substrate binding site.

The protein belongs to the FGAMS family. Monomer. Part of the FGAM synthase complex composed of 1 PurL, 1 PurQ and 2 PurS subunits.

It is found in the cytoplasm. It carries out the reaction N(2)-formyl-N(1)-(5-phospho-beta-D-ribosyl)glycinamide + L-glutamine + ATP + H2O = 2-formamido-N(1)-(5-O-phospho-beta-D-ribosyl)acetamidine + L-glutamate + ADP + phosphate + H(+). It participates in purine metabolism; IMP biosynthesis via de novo pathway; 5-amino-1-(5-phospho-D-ribosyl)imidazole from N(2)-formyl-N(1)-(5-phospho-D-ribosyl)glycinamide: step 1/2. In terms of biological role, part of the phosphoribosylformylglycinamidine synthase complex involved in the purines biosynthetic pathway. Catalyzes the ATP-dependent conversion of formylglycinamide ribonucleotide (FGAR) and glutamine to yield formylglycinamidine ribonucleotide (FGAM) and glutamate. The FGAM synthase complex is composed of three subunits. PurQ produces an ammonia molecule by converting glutamine to glutamate. PurL transfers the ammonia molecule to FGAR to form FGAM in an ATP-dependent manner. PurS interacts with PurQ and PurL and is thought to assist in the transfer of the ammonia molecule from PurQ to PurL. The sequence is that of Phosphoribosylformylglycinamidine synthase subunit PurL from Saccharolobus islandicus (strain Y.N.15.51 / Yellowstone #2) (Sulfolobus islandicus).